The sequence spans 69 residues: Sperm protamine P1 (69 aa).

2 stretches are compositionally biased toward basic residues: residues 1-30 and 37-69; these read MARFRPSRSRSRSLYRRRRRSRRQRSRRGG and KITRRGRGRGKSRRRRGRRSMRSSRRRRRRRRN. The interval 1–69 is disordered; the sequence is MARFRPSRSR…SRRRRRRRRN (69 aa).

This sequence belongs to the protamine P1 family. In terms of tissue distribution, testis.

It is found in the nucleus. The protein localises to the chromosome. In terms of biological role, protamines substitute for histones in the chromatin of sperm during the haploid phase of spermatogenesis. They compact sperm DNA into a highly condensed, stable and inactive complex. The protein is Sperm protamine P1 (PRM1) of Tachyglossus aculeatus aculeatus (Southeast Australian short-beaked echidna).